A 157-amino-acid chain; its full sequence is Frd operon probable iron-sulfur subunit A (157 aa).

3 4Fe-4S ferredoxin-type domains span residues 24–55, 56–85, and 100–133; these read KGFSISTAVVCHQCEDAPCANVCPNGAIIHNK, DYYYVDQDKCIGCKTCVLACPYGTMEVVSR, and FKAEANKCDLCHHRAEGPACVEVCPTQALVCIDR. [4Fe-4S] cluster contacts are provided by Cys-34, Cys-37, Cys-42, Cys-46, Cys-65, Cys-68, Cys-71, Cys-75, Cys-107, Cys-110, Cys-119, and Cys-123.

This is Frd operon probable iron-sulfur subunit A from Proteus vulgaris.